A 467-amino-acid polypeptide reads, in one-letter code: MEYMSTGSDEKEEIDLLINHLNVSEVLDIMENLYASEEPAVYEPSLMTMCPDSNQNKEHSESLLRSGQEVPWLSSVRYGTVEDLLAFANHISNTTKHFYRCRPQESGILLNMVISPQNGRYQIDSDVLLVPWKLTYRSIGSGFVPRGAFGKVYLAQDMKTKKRMACKLIPVDQFKPSDVEIQACFRHENIAELYGAVLWGDTVHLFMEAGEGGSVLEKLESCGPMREFEIIWVTKHVLKGLDFLHSKKVIHHDIKPSNIVFMSTKAVLVDFGLSVQMTEDVYLPKDLRGTEIYMSPEVILCRGHSTKADIYSLGATLIHMQTGTPPWVKRYPRSAYPSYLYIIHKQAPPLEDIAGDCSPGMRELIEAALERNPNHRPKAADLLKHEALNPPREDQPRCQSLDSALFDRKRLLSRKELELPENIADSSCTGSTEESEVLRRQRSLYIDLGALAGYFNIVRGPPTLEYG.

A Phosphothreonine modification is found at Thr-80. Phosphoserine is present on residues Ser-138 and Ser-141. Residues 144–152 and Lys-167 contribute to the ATP site; that span reads VPRGAFGKV. Positions 146 to 388 constitute a Protein kinase domain; that stretch reads RGAFGKVYLA…AADLLKHEAL (243 aa). The active-site Proton acceptor is Asp-253. Residue Thr-290 is modified to Phosphothreonine. Ser-400 and Ser-443 each carry phosphoserine.

Belongs to the protein kinase superfamily. STE Ser/Thr protein kinase family. MAP kinase kinase kinase subfamily. As to quaternary structure, forms a ternary complex with NFKB1/p105 and TNIP2. Interacts with NFKB1; the interaction increases the stability of MAP3K8 but inhibits its MEK phosphorylation activity, whereas loss of interaction following LPS stimulation leads to its degradation. Interacts with CD40 and TRAF6; the interaction is required for ERK activation. Interacts with KSR2; the interaction inhibits ERK and NF-kappa-B activation. Requires Mg(2+) as cofactor. Post-translationally, autophosphorylated. Expressed in spleen, thymus, liver and lung.

The protein resides in the cytoplasm. It catalyses the reaction L-seryl-[protein] + ATP = O-phospho-L-seryl-[protein] + ADP + H(+). The catalysed reaction is L-threonyl-[protein] + ATP = O-phospho-L-threonyl-[protein] + ADP + H(+). In terms of biological role, required for lipopolysaccharide (LPS)-induced, TLR4-mediated activation of the MAPK/ERK pathway in macrophages, thus being critical for production of the pro-inflammatory cytokine TNF-alpha (TNF) during immune responses. Involved in the regulation of T-helper cell differentiation and IFNG expression in T-cells. Involved in mediating host resistance to bacterial infection through negative regulation of type I interferon (IFN) production. Transduces CD40 and TNFRSF1A signals that activate ERK in B-cells and macrophages, and thus may play a role in the regulation of immunoglobulin production. May also play a role in the transduction of TNF signals that activate JNK and NF-kappa-B in some cell types. In adipocytes, activates MAPK/ERK pathway in an IKBKB-dependent manner in response to IL1B and TNF, but not insulin, leading to induction of lipolysis. Plays a role in the cell cycle. This Rattus norvegicus (Rat) protein is Mitogen-activated protein kinase kinase kinase 8 (Map3k8).